Reading from the N-terminus, the 202-residue chain is Imidazoleglycerol-phosphate dehydratase (202 aa).

Belongs to the imidazoleglycerol-phosphate dehydratase family.

It localises to the cytoplasm. It catalyses the reaction D-erythro-1-(imidazol-4-yl)glycerol 3-phosphate = 3-(imidazol-4-yl)-2-oxopropyl phosphate + H2O. Its pathway is amino-acid biosynthesis; L-histidine biosynthesis; L-histidine from 5-phospho-alpha-D-ribose 1-diphosphate: step 6/9. The protein is Imidazoleglycerol-phosphate dehydratase of Rhodopirellula baltica (strain DSM 10527 / NCIMB 13988 / SH1).